A 402-amino-acid chain; its full sequence is Putative epoxide hydrolase AFT8 (402 aa).

Belongs to the peptidase S33 family.

The protein operates within mycotoxin biosynthesis. Putative epoxide hydrolase; part of the gene clusters that mediate the biosynthesis of the host-selective toxins (HSTs) AF-toxins responsible for Alternaria black spot of strawberry disease by the strawberry pathotype. AF-toxin I and III are valine derivatives of 2,3-dyhydroxy-isovaleric acid and 2-hydroxy-isovaleric acid respectively, while AF II is an isoleucine derivative of 2-hydroxy-valeric acid. These derivatives are bound to a 9,10-epoxy-8-hydroxy-9-methyl-decatrienoic acid (EDA) moiety. On cellular level, AF-toxins affect plasma membrane of susceptible cells and cause a sudden increase in loss of K(+) after a few minutes of toxin treatment. The aldo-keto reductase AFTS1 catalyzes the conversion of 2-keto-isovaleric acid (2-KIV) to 2-hydroxy-isovaleric acid (2-HIV) by reduction of its ketone to an alcohol. The acyl-CoA ligase AFT1, the hydrolase AFT2 and the enoyl-CoA hydratases AFT3 and AFT6, but also the polyketide synthase AFT9, the acyl-CoA dehydrogenase AFT10, the cytochrome P450 monooxygenase AFT11 and the oxidoreductase AFT12 are all involved in the biosynthesis of the AK-, AF- and ACT-toxin common EDA structural moiety. The exact function of each enzyme, and of additional enzymes identified within the AF-toxin clusters have still to be determined. The protein is Putative epoxide hydrolase AFT8 of Alternaria alternata (Alternaria rot fungus).